The sequence spans 223 residues: Probable transaldolase (223 aa).

The active-site Schiff-base intermediate with substrate is K86.

It belongs to the transaldolase family. Type 3B subfamily.

Its subcellular location is the cytoplasm. It catalyses the reaction D-sedoheptulose 7-phosphate + D-glyceraldehyde 3-phosphate = D-erythrose 4-phosphate + beta-D-fructose 6-phosphate. It participates in carbohydrate degradation; pentose phosphate pathway; D-glyceraldehyde 3-phosphate and beta-D-fructose 6-phosphate from D-ribose 5-phosphate and D-xylulose 5-phosphate (non-oxidative stage): step 2/3. Its function is as follows. Transaldolase is important for the balance of metabolites in the pentose-phosphate pathway. This is Probable transaldolase (tal) from Thermoplasma volcanium (strain ATCC 51530 / DSM 4299 / JCM 9571 / NBRC 15438 / GSS1).